Consider the following 406-residue polypeptide: Phosphopentomutase (406 aa).

Mn(2+) is bound by residues Asp10, Asp305, His310, Asp346, His347, and His358.

It belongs to the phosphopentomutase family. It depends on Mn(2+) as a cofactor.

It is found in the cytoplasm. The catalysed reaction is 2-deoxy-alpha-D-ribose 1-phosphate = 2-deoxy-D-ribose 5-phosphate. The enzyme catalyses alpha-D-ribose 1-phosphate = D-ribose 5-phosphate. It functions in the pathway carbohydrate degradation; 2-deoxy-D-ribose 1-phosphate degradation; D-glyceraldehyde 3-phosphate and acetaldehyde from 2-deoxy-alpha-D-ribose 1-phosphate: step 1/2. Functionally, isomerase that catalyzes the conversion of deoxy-ribose 1-phosphate (dRib-1-P) and ribose 1-phosphate (Rib-1-P) to deoxy-ribose 5-phosphate (dRib-5-P) and ribose 5-phosphate (Rib-5-P), respectively. The sequence is that of Phosphopentomutase from Methylobacterium radiotolerans (strain ATCC 27329 / DSM 1819 / JCM 2831 / NBRC 15690 / NCIMB 10815 / 0-1).